The sequence spans 394 residues: Probable malate--CoA ligase subunit beta (394 aa).

The ATP-grasp domain maps to 9–244 (KELLARHGVH…KSQEDPRETF (236 aa)). ATP-binding residues include lysine 46, glutamate 99, valine 102, and glutamate 107. Residues asparagine 199 and aspartate 213 each contribute to the Mg(2+) site.

Belongs to the succinate/malate CoA ligase beta subunit family. As to quaternary structure, heterotetramer of two alpha and two beta subunits. It depends on Mg(2+) as a cofactor.

It catalyses the reaction (S)-malate + ATP + CoA = (S)-malyl-CoA + ADP + phosphate. Its pathway is one-carbon metabolism; formaldehyde assimilation via serine pathway. The protein is Probable malate--CoA ligase subunit beta (mtkA) of Mesorhizobium japonicum (strain LMG 29417 / CECT 9101 / MAFF 303099) (Mesorhizobium loti (strain MAFF 303099)).